The sequence spans 407 residues: Acetate kinase (407 aa).

Asparagine 10 provides a ligand contact to Mg(2+). An ATP-binding site is contributed by lysine 17. Arginine 93 contributes to the substrate binding site. The Proton donor/acceptor role is filled by aspartate 150. ATP is bound by residues 210 to 214, 284 to 286, and 332 to 336; these read HLGNG, DMR, and GVGEN. A Mg(2+)-binding site is contributed by glutamate 386.

The protein belongs to the acetokinase family. In terms of assembly, homodimer. Mg(2+) serves as cofactor. It depends on Mn(2+) as a cofactor.

Its subcellular location is the cytoplasm. The catalysed reaction is acetate + ATP = acetyl phosphate + ADP. The protein operates within metabolic intermediate biosynthesis; acetyl-CoA biosynthesis; acetyl-CoA from acetate: step 1/2. Its function is as follows. Catalyzes the formation of acetyl phosphate from acetate and ATP. Can also catalyze the reverse reaction. The sequence is that of Acetate kinase from Streptomyces coelicolor (strain ATCC BAA-471 / A3(2) / M145).